The sequence spans 275 residues: MPVKKYKPTSPGRRNMSVSTFEEITKKEPERSLLEPLRKKAGRNNYGRITVRHRGGGHKRHYRRIDFKRDKIGVPAKVAAIEYDPNRSARIALLHYVDGEKRYILAPLGLNVGDTVMSGPDADIRVGNALPLRQIPLGTQVHNVELEKGRGGVMVRSAGAAAQLMAKEGNYATLRMPSGEVRRVFIECMATIGQVGNLDHQNIRLGKAGRKRWLGRRPEVRGAAMNPRDHPHGGGEGRAPRGMPTPKTKWGKPARGVKTRHNPRTDPFIIRRRTR.

Positions 220-275 are disordered; it reads VRGAAMNPRDHPHGGGEGRAPRGMPTPKTKWGKPARGVKTRHNPRTDPFIIRRRTR. Over residues 227–239 the composition is skewed to basic and acidic residues; sequence PRDHPHGGGEGRA. The segment covering 249–262 has biased composition (basic residues); that stretch reads KWGKPARGVKTRHN.

This sequence belongs to the universal ribosomal protein uL2 family. Part of the 50S ribosomal subunit. Forms a bridge to the 30S subunit in the 70S ribosome.

In terms of biological role, one of the primary rRNA binding proteins. Required for association of the 30S and 50S subunits to form the 70S ribosome, for tRNA binding and peptide bond formation. It has been suggested to have peptidyltransferase activity; this is somewhat controversial. Makes several contacts with the 16S rRNA in the 70S ribosome. The protein is Large ribosomal subunit protein uL2 of Roseiflexus sp. (strain RS-1).